The sequence spans 240 residues: Diglucosylglycerate octanoyltransferase (240 aa).

This sequence belongs to the OctT acyltransferase family. Homotetramer.

It carries out the reaction (2R)-2-O-[alpha-D-glucopyranosyl-(1-&gt;6)-alpha-D-glucopyranosyl]-glycerate + octanoyl-CoA = (2R)-2-O-[6-O-octanoyl-alpha-D-glucopyranosyl-(1-&gt;6)-alpha-D-glucopyranosyl]-glycerate + CoA. Functionally, sugar octanoyltransferase likely involved in the biosynthesis of mycobacterial methylglucose lipopolysaccharide (MGLP). Catalyzes the transfer of an octanoyl group from octanoyl-CoA to the C6 OH of the second glucose in diglucosylglycerate (DGG). Can also use hexanoyl-CoA as acyl donor in vitro. DGG is the preferred acceptor, but to a lesser extent, GG (glucosylglycerate) can be used as substrate. DGG and GG are the two earliest intermediates in MGLP biosynthesis. The polypeptide is Diglucosylglycerate octanoyltransferase (Mycolicibacterium hassiacum (strain DSM 44199 / CIP 105218 / JCM 12690 / 3849) (Mycobacterium hassiacum)).